The sequence spans 3206 residues: Highly reducing polyketide synthase ltbA (3206 aa).

Residues 5–434 (PAPIAIIGVG…GTNCHVILEA (430 aa)) form the Ketosynthase family 3 (KS3) domain. Residues C179, H314, and H354 each act as for beta-ketoacyl synthase activity in the active site. The segment covering 441 to 463 (PTGTNGIKTNGTRINGIKTNGAD) has biased composition (polar residues). Residues 441–472 (PTGTNGIKTNGTRINGIKTNGADTNERESMKN) are disordered. The tract at residues 575–890 (VFSGQGAQWH…EYLSALQRNT (316 aa)) is malonyl-CoA:ACP transacylase (MAT) domain. The tract at residues 958–1098 (HDLLGLFDPA…GEITVEYETD (141 aa)) is N-terminal hotdog fold. Residues 958–1278 (HDLLGLFDPA…LLVNLRAIGE (321 aa)) are dehydratase (DH) domain. The PKS/mFAS DH domain maps to 958–1284 (HDLLGLFDPA…AIGETREDED (327 aa)). The active-site Proton acceptor; for dehydratase activity is the H990. The tract at residues 1128 to 1284 (DTDMTKSEFY…AIGETREDED (157 aa)) is C-terminal hotdog fold. D1193 (proton donor; for dehydratase activity) is an active-site residue. A methyltransferase (CMet) domain region spans residues 1450 to 1640 (ESGILVGPYE…LARNGFGGIH (191 aa)). Residues 1871–2185 (LLSSLRFVDD…RKHTGKVVLQ (315 aa)) are enoyl reductase (ER) domain. The interval 2208–2395 (GTYVAAGGLG…SVDAHGALKE (188 aa)) is ketoreductase (KR) domain. The Carrier domain occupies 2499-2577 (EEAEQLIRDA…ALAATVASRS (79 aa)). S2537 is subject to O-(pantetheine 4'-phosphoryl)serine. A disordered region spans residues 2584–2611 (IRHSSRLQEATTQAENKDAPKNEKEGPS). The segment covering 2598–2610 (ENKDAPKNEKEGP) has biased composition (basic and acidic residues). A carnitine O-acyltransferase (cAT) domain region spans residues 2994–3206 (HLIPSFGKAV…IKTIIQAGQE (213 aa)).

Pantetheine 4'-phosphate serves as cofactor.

It participates in secondary metabolite biosynthesis. Functionally, highly reducing polyketide synthase; part of the gene cluster that mediates the biosynthesis of luteodienoside A, a glycosylated polyketide consisting of an unusual 1-O-beta-D-glucopyranosyl-myo-inositol (glucinol) ester of 3-hydroxy-2,2,4-trimethylocta-4,6-dienoic acid. LtbA produces the trimethylated polyketide chain from acetyl-CoA, malonyl-CoA and S-adenosylmethionine (SAM). The ltbA carnitine O-acyltransferase (cAT) domain then uses glucinol produced by the glycosyltransferase ltbB as an offloading substrate to release luteodienoside A. Furthermore, the PKS C-methyltransferase (CMeT) domain is capable of catalysing gem-dimethylation of the 3-hydroxy-2,2,4-trimethylocta-4,6-dienoic acid intermediate, without requiring reversible product release and recapture by the cAT domain. Since ltbA and ltbB are sufficient for the biosynthesis of luteodienoside A, the functions of the methyltransferase ltbC and the FAD-binding monooxygenase ltbD within the pathway remain obscur. The protein is Highly reducing polyketide synthase ltbA of Aspergillus luteorubrus.